The primary structure comprises 226 residues: Octanoyltransferase (226 aa).

Positions 34–216 (GEANELVWLL…AWTEAFGPVR (183 aa)) constitute a BPL/LPL catalytic domain. Substrate contacts are provided by residues 73-80 (RGGEYTYH), 145-147 (AIG), and 158-160 (GIA). Residue C176 is the Acyl-thioester intermediate of the active site.

The protein belongs to the LipB family.

It localises to the cytoplasm. The enzyme catalyses octanoyl-[ACP] + L-lysyl-[protein] = N(6)-octanoyl-L-lysyl-[protein] + holo-[ACP] + H(+). Its pathway is protein modification; protein lipoylation via endogenous pathway; protein N(6)-(lipoyl)lysine from octanoyl-[acyl-carrier-protein]: step 1/2. In terms of biological role, catalyzes the transfer of endogenously produced octanoic acid from octanoyl-acyl-carrier-protein onto the lipoyl domains of lipoate-dependent enzymes. Lipoyl-ACP can also act as a substrate although octanoyl-ACP is likely to be the physiological substrate. The polypeptide is Octanoyltransferase (Maricaulis maris (strain MCS10) (Caulobacter maris)).